The following is a 375-amino-acid chain: OVARIAN TUMOR DOMAIN-containing deubiquitinating enzyme 7 (375 aa).

Positions 1–18 (MAKTKQQKSKPKKQPHQK) are enriched in basic residues. The interval 1 to 23 (MAKTKQQKSKPKKQPHQKQGKDC) is disordered. Residues 37-161 (LKIIQVTADG…GEHYNSVRSK (125 aa)) form the OTU domain. The active site involves Asp45. The active-site Nucleophile is Cys48. His154 is an active-site residue. Residues 202–250 (HVNAGAIKVVMSGSCCDNTEKAEQVLLQVNGDVDAAIEFLIADQGMESL) enclose the UBA-like domain. 2 stretches are compositionally biased toward polar residues: residues 251–264 (TEND…SDTI) and 290–305 (ASGN…CTTQ). Residues 251-306 (TENDTETASASDTINPKHASDSPMENTEQAREELIEEESASGNNSETVQAKCTTQT) are disordered. Residues 308-315 (DKKIPRNK) carry the Nuclear localization signal motif.

It belongs to the peptidase C85 family.

The protein localises to the nucleus. The enzyme catalyses Thiol-dependent hydrolysis of ester, thioester, amide, peptide and isopeptide bonds formed by the C-terminal Gly of ubiquitin (a 76-residue protein attached to proteins as an intracellular targeting signal).. Hydrolase that can remove conjugated ubiquitin from proteins in vitro and may therefore play an important regulatory role at the level of protein turnover by preventing degradation. Cysteine protease with a preference for 'Lys-63' over 'Lys-48' over 'Met-1' -linked ubiquitin (UB) tetramers as substrates. Also cleaves RUB-GST fusion. This chain is OVARIAN TUMOR DOMAIN-containing deubiquitinating enzyme 7, found in Arabidopsis thaliana (Mouse-ear cress).